Consider the following 404-residue polypeptide: Probable thioredoxin reductase ARB_06224 (404 aa).

A signal peptide spans 1–22; it reads MGVQRLALALIAFTSALTSVIA. An FAD-binding site is contributed by 67 to 75; the sequence is DEGIYRNGA. Cys-172 and Cys-175 are joined by a disulfide. Asn-213 is a glycosylation site (N-linked (GlcNAc...) asparagine). 334–343 is a binding site for FAD; sequence DANNDGSTNG.

Belongs to the class-II pyridine nucleotide-disulfide oxidoreductase family. In terms of assembly, homodimer. FAD is required as a cofactor.

It localises to the secreted. It catalyses the reaction [thioredoxin]-dithiol + NADP(+) = [thioredoxin]-disulfide + NADPH + H(+). This chain is Probable thioredoxin reductase ARB_06224, found in Arthroderma benhamiae (strain ATCC MYA-4681 / CBS 112371) (Trichophyton mentagrophytes).